The following is a 522-amino-acid chain: Sterol O-acyltransferase 2 (522 aa).

2 disordered regions span residues 1–36 (MEPG…HRAP) and 74–96 (SYPS…TQEP). Residues 1 to 120 (MEPGGARLRL…LDELMEVQHF (120 aa)) lie on the Cytoplasmic side of the membrane. Basic and acidic residues predominate over residues 17-36 (GGERERQPCGDGNTETHRAP). Histidine 119 serves as a coordination point for cholesterol. The helical transmembrane segment at 121-142 (RTIYHMFIAGLCVFIISTLAID) threads the bilayer. Topologically, residues 143 to 162 (FIDEGRLLLEFDLLIFSFGQ) are lumenal. The chain crosses the membrane as a helical span at residues 163–188 (LPLALVTWVPMFLSTLLAPYQALRLW). The Cytoplasmic portion of the chain corresponds to 189 to 196 (ARGTWTQA). A helical transmembrane segment spans residues 197 to 220 (TGLGCALLAAHAVVLCALPVHVAV). The Lumenal portion of the chain corresponds to 221–228 (EHQLPPAS). Residues 229-252 (RCVLVFEQVRFLMKSYSFLREAVP) traverse the membrane as a helical segment. Residues 253-293 (GTLRARRGEGIQAPSFSSYLYFLFCPTLIYRETYPRTPYVR) are Cytoplasmic-facing. The residue at position 277 (cysteine 277) is a Cysteine sulfenic acid (-SOH); alternate. Cysteine 277 is covalently cross-linked (Glycyl cysteine thioester (Cys-Gly) (interchain with G-Cter in ubiquitin); alternate). A helical transmembrane segment spans residues 294–326 (WNYVAKNFAQALGCVLYACFILGRLCVPVFANM). The Lumenal portion of the chain corresponds to 327–343 (SREPFSTRALVLSILHA). A helical transmembrane segment spans residues 344–369 (TLPGIFMLLLIFFAFLHCWLNAFAEM). Residues 370–417 (LRFGDRMFYRDWWNSTSFSNYYRTWNVVVHDWLYSYVYQDGLRLLGAR) are Cytoplasmic-facing. The FYXDWWN motif motif lies at 377–383 (FYRDWWN). Positions 389, 392, 395, 399, 407, and 430 each coordinate an acyl-CoA. Residues 418–442 (ARGVAMLGVFLVSAVAHEYIFCFVL) traverse the membrane as a helical segment. Residue histidine 434 is part of the active site. Over 443 to 448 (GFFYPV) the chain is Lumenal. Residues 449 to 464 (MLILFLVIGGMLNFMM) traverse the membrane as a helical segment. The Cytoplasmic portion of the chain corresponds to 465-470 (HDQRTG). Residues 471-502 (PAWNVLMWTMLFLGQGIQVSLYCQEWYARRHC) traverse the membrane as a helical segment. Residues 503–522 (PLPQATFWGLVTPRSWSCHT) lie on the Lumenal side of the membrane.

The protein belongs to the membrane-bound acyltransferase family. Sterol o-acyltransferase subfamily. As to quaternary structure, may form homo- or heterodimers. Interacts with INSIG1; the interaction is direct and promotes association with AMFR/gp78. Post-translationally, polyubiquitinated by AMFR/gp78 at Cys-277, leading to its degradation when the lipid levels are low. Association with AMFR/gp78 is mediated via interaction with INSIG1. High concentration of cholesterol and fatty acid results in Cys-277 oxidation, preventing ubiquitination at the same site, resulting in protein stabilization. In terms of processing, oxidized at Cys-277: high concentration of cholesterol and fatty acid induce reactive oxygen species, which oxidizes Cys-277, preventing ubiquitination at the same site, and resulting in protein stabilization. In terms of tissue distribution, expression seems confined in hepatocytes and enterocytes.

It is found in the endoplasmic reticulum membrane. The catalysed reaction is a sterol + a long-chain fatty acyl-CoA = a long-chain 3-hydroxysterol ester + CoA. It catalyses the reaction cholesterol + an acyl-CoA = a cholesterol ester + CoA. The enzyme catalyses cholesterol + (9Z)-octadecenoyl-CoA = cholesteryl (9Z-octadecenoate) + CoA. It carries out the reaction (5Z,8Z,11Z,14Z,17Z)-eicosapentaenoyl-CoA + cholesterol = (5Z,8Z,11Z,14Z,17Z-eicosapentaenoyl)-cholesterol + CoA. The catalysed reaction is (9Z,12Z,15Z)-octadecatrienoyl-CoA + cholesterol = (9Z,12Z,15Z-octadecatrienoyl)-cholesterol + CoA. It catalyses the reaction (5Z,8Z,11Z,14Z)-eicosatetraenoyl-CoA + cholesterol = cholesteryl (5Z,8Z,11Z,14Z)-eicosatetraenoate + CoA. Its function is as follows. Catalyzes the formation of fatty acid-cholesterol esters, which are less soluble in membranes than cholesterol. Plays a role in lipoprotein assembly and dietary cholesterol absorption. Utilizes oleoyl-CoA ((9Z)-octadecenoyl-CoA) and linolenoyl-CoA ((9Z,12Z,15Z)-octadecatrienoyl-CoA) as substrates. May provide cholesteryl esters for lipoprotein secretion from hepatocytes and intestinal mucosa. Functionally, has lower enzymatic activity compared to isoform 1. The chain is Sterol O-acyltransferase 2 from Homo sapiens (Human).